The following is a 520-amino-acid chain: MAYFNQHQSMISKRYLTFFSKSKKKKPFSAGQLIGLILGPLLFLLTLLFFHPQDLPWKGVYVLAITLWIATWWITEAIPIAATSLLPIVLLPLGHILTPEQVSSEYGNDIIFLFLGGFILAIAMERWNLHTRVALTIINLIGASTSKILLGFMVATGFLSMFVSNTAAVMIMIPIGLAIIKEAHDLQEANTNQTSIQKFEKSLVLAIGYAGTIGGLGTLIGTPPLIILKGQYMQHFGHEISFAKWMIVGIPTVIVLLGITWLYLRYVAFRHDLKYLPGGQTLIKQKLDELGKMKYEEKVVQTIFVLASLLWITREFLLKKWEVTSSVADGTIAIFISILLFIIPAKNTEKHRRIIDWEVAKELPWGVLILFGGGLALAKGISESGLAKWLGEQLKSLNGVSPILIVIVITIFVLFLTEVTSNTATATMILPILATLSVAVGVHPLLLMAPAAMAANCAYMLPVGTPPNAIIFGSGKISIKQMASVGFWVNLISAIIIILVVYYVMPIVLGIDINQPLPLK.

14 helical membrane-spanning segments follow: residues 30 to 50, 55 to 75, 77 to 97, 104 to 124, 160 to 180, 207 to 227, 242 to 262, 298 to 318, 323 to 343, 362 to 382, 399 to 419, 428 to 448, 452 to 472, and 491 to 511; these read AGQL…LLFF, LPWK…WWIT, AIPI…GHIL, SEYG…AIAM, SMFV…LAII, IGYA…PLII, FAKW…ITWL, KVVQ…EFLL, VTSS…LFII, ELPW…KGIS, GVSP…LTEV, MILP…LLLM, AMAA…AIIF, and LISA…VLGI.

This sequence belongs to the SLC13A/DASS transporter (TC 2.A.47) family. NADC subfamily.

It localises to the cell membrane. Functionally, mediates the transport of the dicarboxylates fumarate, malate, and succinate across the cytoplasmic membrane via a Na(+)-electrochemical gradient. The chain is Sodium-dependent dicarboxylate transporter SdcS (sdcS) from Staphylococcus aureus (strain NCTC 8325 / PS 47).